Consider the following 215-residue polypeptide: Beta-crystallin A3 (215 aa).

An N-terminal arm region spans residues 1–30 (MGEAAVPPELDTFPAAKMAQTNPLPVPMGP). Beta/gamma crystallin 'Greek key' domains are found at residues 31 to 70 (WKIT…KVEC) and 71 to 117 (GAWV…RPVC). The segment at 118-123 (SANHKE) is connecting peptide. Beta/gamma crystallin 'Greek key' domains lie at 124-165 (SKIT…KIPC) and 166-214 (GAWV…RRIQ).

The protein belongs to the beta/gamma-crystallin family. As to quaternary structure, homo/heterodimer, or complexes of higher-order. The structure of beta-crystallin oligomers seems to be stabilized through interactions between the N-terminal arms.

In terms of biological role, crystallins are the dominant structural components of the vertebrate eye lens. In Gallus gallus (Chicken), this protein is Beta-crystallin A3 (CRYBA1).